The primary structure comprises 456 residues: Phosphomannomutase (456 aa).

Ser-98 serves as the catalytic Phosphoserine intermediate. Mg(2+)-binding residues include Ser-98, Asp-245, Asp-247, and Asp-249.

The protein belongs to the phosphohexose mutase family. The cofactor is Mg(2+).

The catalysed reaction is alpha-D-mannose 1-phosphate = D-mannose 6-phosphate. It participates in nucleotide-sugar biosynthesis; GDP-alpha-D-mannose biosynthesis; alpha-D-mannose 1-phosphate from D-fructose 6-phosphate: step 2/2. In terms of biological role, involved in the biosynthesis of the capsular polysaccharide colanic acid. The protein is Phosphomannomutase (manB) of Salmonella typhimurium (strain LT2 / SGSC1412 / ATCC 700720).